The following is a 127-amino-acid chain: Insulin-like growth factor 3.L (127 aa).

Positions 1 to 49 (MPVTAMCLQDSKKLKKAKLTRKKVTPFPFSRMVLCLSLVFTLYVEATNA) are cleaved as a signal peptide. Positions 49 to 80 (ARCLRPRSKELLCGSELVDILQFICGPTGFYV) are b. 3 disulfide bridges follow: cysteine 61/cysteine 99, cysteine 73/cysteine 112, and cysteine 98/cysteine 103. The tract at residues 81 to 92 (SKGASFRNRNRP) is c. Residues 93–113 (GIVEECCFCGCSVAILESYCA) are a. Residues 114 to 121 (APVTNFTG) are d. The propeptide at 122-127 (REEQKS) is e peptide.

Belongs to the insulin family.

It localises to the secreted. Functionally, the insulin-like growth factors, isolated from plasma, are structurally and functionally related to insulin but have a much higher growth-promoting activity. Promotes anterior neural development. The sequence is that of Insulin-like growth factor 3.L from Xenopus laevis (African clawed frog).